The sequence spans 131 residues: Bacteriohemerythrin (131 aa).

Fe cation is bound by residues His20, Glu23, His56, Glu60, His75, His79, His117, and Asp122.

The protein belongs to the hemerythrin family. Monomer.

Functionally, oxygen-binding protein. May be involved in a storage mechanism or for delivery to oxygen-requiring enzymes. The oxygen-binding site contains two iron atoms. This is Bacteriohemerythrin from Aquifex aeolicus (strain VF5).